Here is a 118-residue protein sequence, read N- to C-terminus: REPTOR-binding partner (118 aa).

Positions Met-1 to Gln-20 are enriched in polar residues. A disordered region spans residues Met-1–Ser-53. Residues Thr-36 to Ser-53 show a composition bias toward basic and acidic residues. A basic motif region spans residues Lys-40–Lys-77. A bZIP domain is found at Lys-40–Ile-90. A leucine-zipper region spans residues Leu-82–Leu-89.

Belongs to the bZIP family. ATF subfamily. Homodimer. Interacts (via C-terminus) with REPTOR (via C-terminus).

It localises to the nucleus. Its subcellular location is the chromosome. In terms of biological role, transcriptional regulator that acts in the TORC1 signaling pathway to regulate energy homeostasis and promote survival during nutrient deprivation. Interacts with REPTOR to form a transcriptional activator complex that functions downstream of TORC1 to up-regulate the expression of most target genes induced by TORC1 inhibition. In the complex, acts to enhance the binding of the transcriptional activator REPTOR to the regulatory sequences of target genes. Under normal conditions TORC1 is active, inhibiting the formation of the REPTOR/REPTOR-BP complex by phosphorylating REPTOR and mediates its cytoplasmic retention by forming a docking site for 14-3-3 proteins. Upon TORC1 inhibition resulting from nutrient stress, REPTOR is recruited into the nucleus where it interacts with REPTOR-BP and together they maintain organismal metabolism by activating the expression of target stress response genes including those involved in glycogenesis and triglyceride biosynthesis. The complex also appears to negatively regulate some aspects of TORC1-dependent larval growth. The sequence is that of REPTOR-binding partner from Drosophila melanogaster (Fruit fly).